Consider the following 483-residue polypeptide: Cobyric acid synthase (483 aa).

The GATase cobBQ-type domain maps to Ala-251–Phe-438. Cys-333 functions as the Nucleophile in the catalytic mechanism. The active site involves His-430.

Belongs to the CobB/CobQ family. CobQ subfamily.

Its pathway is cofactor biosynthesis; adenosylcobalamin biosynthesis. Its function is as follows. Catalyzes amidations at positions B, D, E, and G on adenosylcobyrinic A,C-diamide. NH(2) groups are provided by glutamine, and one molecule of ATP is hydrogenolyzed for each amidation. In Brucella canis (strain ATCC 23365 / NCTC 10854 / RM-666), this protein is Cobyric acid synthase.